We begin with the raw amino-acid sequence, 827 residues long: Carnosine synthase 1 (827 aa).

In terms of domain architecture, ATP-grasp spans 516-720 (GPPWPAPSLH…LLLAAVMVAC (205 aa)). ATP is bound at residue 542 to 611 (VHQVPLPGVM…MEFVEGTEHD (70 aa)). The Mg(2+) site is built by E677, E689, and N691. E677, E689, and N691 together coordinate Mn(2+).

As to quaternary structure, homotetramer. Mg(2+) serves as cofactor. The cofactor is Mn(2+).

The catalysed reaction is beta-alanine + L-histidine + ATP = carnosine + ADP + phosphate + H(+). It catalyses the reaction 4-aminobutanoate + L-histidine + ATP = L-homocarnosine + ADP + phosphate + H(+). Its function is as follows. Catalyzes the synthesis of carnosine and homocarnosine. Carnosine is synthesized more efficiently than homocarnosine. The protein is Carnosine synthase 1 of Homo sapiens (Human).